A 519-amino-acid chain; its full sequence is MSDLFEDPAPSRNTPEFTVSELSGAVKRVIEGEFGLVRVRGEIGRVSRPASGHLYFDLKDDRAVMAAICWKGQAGRLSVRPEEGMEVVATGRMTTFPGQSKYQIIVEDMAPAGAGALMAMLEKRRAALAAEGLFDAARKHPLPFLPRVIGVVTSPSGAVIRDILHRLRDRFPSHVLIWPVAVQGEKCAPEVAAAIRGFNALPEGGPIPRPDLLIVARGGGSLEDLWGFNEEIVVRAAAESRIPLISAVGHETDTTLIDHAADRRAPTPTAAAEMAVPVRLELLAGLDGQVARLSRCAAETIRRRDQRLRDLARALPRLESLVAGPSQRFDLWSGRLSGALGQSVAARRARLEPLGAHLRPRLLADLVARQKDRLGDRTRSLETCLGRRAERARDRFDALSARLAPAFARLIAETERATRRDAATLGTLAARLDAAPEARLARLSDRLEALDRLRQTLGYRETLKRGYAVVRADGAVLTTKAEAGAAAMLEIEFQDGRLSVGRGKTRKPKEEPPAQGSLL.

Residues 500 to 519 are disordered; sequence VGRGKTRKPKEEPPAQGSLL.

It belongs to the XseA family. Heterooligomer composed of large and small subunits.

The protein localises to the cytoplasm. The catalysed reaction is Exonucleolytic cleavage in either 5'- to 3'- or 3'- to 5'-direction to yield nucleoside 5'-phosphates.. Bidirectionally degrades single-stranded DNA into large acid-insoluble oligonucleotides, which are then degraded further into small acid-soluble oligonucleotides. This is Exodeoxyribonuclease 7 large subunit from Cereibacter sphaeroides (strain ATCC 17023 / DSM 158 / JCM 6121 / CCUG 31486 / LMG 2827 / NBRC 12203 / NCIMB 8253 / ATH 2.4.1.) (Rhodobacter sphaeroides).